The primary structure comprises 228 residues: Cytidylate kinase (228 aa).

17–25 (GPTASGKGT) lines the ATP pocket.

This sequence belongs to the cytidylate kinase family. Type 1 subfamily.

The protein localises to the cytoplasm. It catalyses the reaction CMP + ATP = CDP + ADP. The enzyme catalyses dCMP + ATP = dCDP + ADP. This is Cytidylate kinase from Burkholderia cenocepacia (strain HI2424).